The sequence spans 270 residues: A-type potassium channel modulatory protein KCNIP2 (270 aa).

Basic and acidic residues predominate over residues 1-17 (MRGQGRKESLSDSRDLD). Positions 1–32 (MRGQGRKESLSDSRDLDGSYDQLTGHPPGPTK) are disordered. Serine 9 carries the post-translational modification Phosphoserine. Residues cysteine 45 and cysteine 46 are each lipidated (S-palmitoyl cysteine). The region spanning 81–137 (FELSTVCHRPEGLEQLQEQTKFTRKELQVLYRGFKNECPSGIVNEENFKQIYSQFFP) is the EF-hand 1; degenerate domain. 3 consecutive EF-hand domains span residues 140–175 (DSSTYATFLFNAFDTNHDGSVSFEDFVAGLSVILRG), 176–211 (TVDDRLNWAFNLYDLNKDGCITKEEMLDIMKSIYDM), and 224–259 (APREHVESFFQKMDRNKDGVVTIEEFIESCQKDENI). Ca(2+)-binding residues include aspartate 153, asparagine 155, aspartate 157, serine 159, aspartate 164, aspartate 189, asparagine 191, aspartate 193, cysteine 195, glutamate 200, aspartate 237, asparagine 239, aspartate 241, and glutamate 248. Residues 257–270 (ENIMRSMQLFDNVI) are interaction with KCND2.

Belongs to the recoverin family. As to quaternary structure, component of heteromultimeric potassium channels. Identified in potassium channel complexes containing KCND1, KCND2, KCND3, KCNIP1, KCNIP2, KCNIP3, KCNIP4, DPP6 and DPP10. The KCND2-KCNIP2 channel complex contains four KCND2 and four KCNIP2 subunits. Interacts with KCND2. Probably part of a complex consisting of KCNIP1, KCNIP2 isoform 3 and KCND2. At least isoform 2 and isoform 3 can self-associate to form homodimers and homotetramers. Isoform 3 interacts with KCNIP1 in a calcium-dependent manner. Interacts with KCND3; each KCNIP2 monomer interacts with two adjacent KCND3 subunits, through both the N-terminal inactivation ball of a KCND3 subunit and a C-terminal helix from the adjacent KCND3 subunit, clamping them together; this interaction modulates the channel gating kinetics. In terms of processing, palmitoylated. Palmitoylation enhances association with the plasma membrane. In terms of tissue distribution, expressed in brain. Colocalizes with KCND2 in excitatory neurons including cortical and hippocampal CA1 pyramidal cells. Isoform 3 is expressed in heart and in umbilical vein endothelial cells. Not expressed in fetal heart.

Its subcellular location is the cell membrane. In terms of biological role, regulatory subunit of Kv4/D (Shal)-type voltage-gated rapidly inactivating A-type potassium channels. Modulates channel density, inactivation kinetics and rate of recovery from inactivation in a calcium-dependent and isoform-specific manner. Involved in KCND2 and KCND3 trafficking to the cell surface. May be required for the expression of I(To) currents in the heart. The protein is A-type potassium channel modulatory protein KCNIP2 of Homo sapiens (Human).